The primary structure comprises 406 residues: Outer membrane protein assembly factor BamB (406 aa).

Positions 1-23 (MMKQVDMYKRVALIALMGMSLAG) are cleaved as a signal peptide. The N-palmitoyl cysteine moiety is linked to residue C24. A lipid anchor (S-diacylglycerol cysteine) is attached at C24.

This sequence belongs to the BamB family. Part of the Bam complex.

The protein resides in the cell outer membrane. Part of the outer membrane protein assembly complex, which is involved in assembly and insertion of beta-barrel proteins into the outer membrane. In Xanthomonas campestris pv. campestris (strain ATCC 33913 / DSM 3586 / NCPPB 528 / LMG 568 / P 25), this protein is Outer membrane protein assembly factor BamB.